The sequence spans 453 residues: Ribosomal protein uS12 methylthiotransferase RimO (453 aa).

The MTTase N-terminal domain occupies 9-124 (PKVGFVSLGC…VMEAVHTHLP (116 aa)). Residues cysteine 18, cysteine 54, cysteine 83, cysteine 155, cysteine 159, and cysteine 162 each contribute to the [4Fe-4S] cluster site. A Radical SAM core domain is found at 141–382 (LTPKHYAYLK…MEVAERVSAR (242 aa)). Residues 385-453 (QRKVGKTLRV…ADGHDLWGEV (69 aa)) enclose the TRAM domain.

This sequence belongs to the methylthiotransferase family. RimO subfamily. [4Fe-4S] cluster is required as a cofactor.

It is found in the cytoplasm. It carries out the reaction L-aspartate(89)-[ribosomal protein uS12]-hydrogen + (sulfur carrier)-SH + AH2 + 2 S-adenosyl-L-methionine = 3-methylsulfanyl-L-aspartate(89)-[ribosomal protein uS12]-hydrogen + (sulfur carrier)-H + 5'-deoxyadenosine + L-methionine + A + S-adenosyl-L-homocysteine + 2 H(+). Functionally, catalyzes the methylthiolation of an aspartic acid residue of ribosomal protein uS12. The sequence is that of Ribosomal protein uS12 methylthiotransferase RimO from Ralstonia nicotianae (strain ATCC BAA-1114 / GMI1000) (Ralstonia solanacearum).